The following is a 968-amino-acid chain: MKDTSSKRPKSKEANKKKTKDKSNADNLPKPEEAAASEPGHPEYIFPLVLTSVSQELFGCRADEDVTAENPHKLLKKQDIIQDLRHRAAVCDFSPVKQAVLDYPEDELLLVFDRDFIYGQSFYLVLTVQAKESILKPPAEGADEQMEDEEQQEEEEEMMTKTPEPQPWVSLGSERLVYTPSAVLSSVICVRQLRYSVCPLGRRSGTRVRFSDRNALDWKEELVECSSYEDKSFSITRMERDSSTQTCRDNTHTCTQTLWKKPKNMWSQYEPREFSSEEKQHQLQSENLKNFITSVARRFEIYLQQNLIADVFCDDWTALCEDDASLMGKTETQLKEYQSFMDLHFSKEKTISHVQWHPSISGVIVVSMMERLSLEERIDSSTKLLLNPSHILFWSFSDPINPQLQLECPDDVLCFQFSPSDHNIIAGGCMNGQVVLWDISAHVDRLQDTRSGGKNILNKLGKSDATPVVRYCAVSGIENGHKAPITDIQWLPETFEVNKLGTPVENQSRTSVQLVTCAPDCCVLFWDLRAPRVMVHSLTDIKQKQEEKPLENPHGVPNTFTHLNLTWKPFIRVSLPKISSSGEYSPLRFSMRENTVDYNTGDKSVSGADSRVFAQLRMQSAKQQKPLQNISTKLYIATEDGELVYTDWKVEKDNDSGRMLSAKPLDVFLLQDTLLHTVSRSPFFRDIILTVGRFSFSIWREGLTCGPLLMSVYSKSMFSAGHWSRSRPAVLFMGREDGDVEVWDLLQNSRQPSHTQNISTAAISCIRTQTSSGNTHPYTETLHTHTHTQPPSAAYAHRPAPVTHTHTHKHCTHTHTHTHTHTHTHSRHQLHTHTDQLRVLEERVREAKQNLLAVSDRLGTLHILQIPGSLRRSSSSERQNVEKYFEKEEERLQYFEKRQSDHQKKKKETEAEQQKKKTELVTPPKQEEEVNAETLKEYQQFLTLEKLILKDMNIQNETQQTCNTINTP.

Residues 1 to 33 (MKDTSSKRPKSKEANKKKTKDKSNADNLPKPEE) show a composition bias toward basic and acidic residues. 2 disordered regions span residues 1 to 39 (MKDT…ASEP) and 136 to 166 (KPPA…PEPQ). Residues 141–157 (GADEQMEDEEQQEEEEE) show a composition bias toward acidic residues. 3 WD repeats span residues 407–447 (ECPD…DRLQ), 480–536 (GHKA…VMVH), and 712–753 (VYSK…RQPS). Residues 830-857 (LHTHTDQLRVLEERVREAKQNLLAVSDR) are a coiled coil. The span at 897–919 (KRQSDHQKKKKETEAEQQKKKTE) shows a compositional bias: basic and acidic residues. Residues 897–930 (KRQSDHQKKKKETEAEQQKKKTELVTPPKQEEEV) form a disordered region.

In terms of assembly, part of the multisubunit axonemal dynein complex formed at least of two heavy chains and a number of intermediate and light chains.

The protein localises to the cytoplasm. In terms of biological role, may be involved in the regulation of cilia function. The chain is Dynein axonemal intermediate chain 3 (dnai3) from Danio rerio (Zebrafish).